The primary structure comprises 675 residues: MKGYLTFVLHTHIPYVRKHGKWPFGEEWVFEAISETYIPLLMEFERLRDSGVKFGIVINVTPVLAEQLTDEYMKKAFEEYMERKLKAMEEDLKSGKYDEKAVSYMLNYFRKVYDYWKAINGDIIGKLRELQDQGYVEVITSAATHGYLPLLGRDEAIRAQIANGVATYEKHFGMKPKGIWLPECAYRPAGEWELPGGRKVKRQGIEKFLEEFGLRYFFVESRLIDEGPASNVYGEVLIADTEKTTLRPYWIKGSNVAVFARNRETGHQVWSAHYGYPGDFWYREFHKKAPKSGGQYWRITSKEVGLGEKEFYDPDKAMERVEEHARHFVSLVERLLREHEEKFGEKGIIVAPYDTELFGHWWFEGVKWLGRVLELLYQRGVETPTLSRFLEEYSGEKHEIELPEGSWGANSDHSTWWNEETEWTWPHIYRAEDRMVAIVSRFRGRDELTNRVIEQLARELLILEASDWQFLITTGQAKEYAKRRVLIHSRDFHRLANELVRYVKIGEFDVKLLEELEERDNPFRPVVVGPYVSENPPELEEYVEPPEVPPEKEETEEKPKVLTEKATSLALAVKKVKPVKEETREVKKKAVEASKRGKRKSSKSKRLPRKVSKKAPSKGPSDLLSIKGIGPKTFQKLKRAGVETIEDLKNANIEDLARKTGISTKRLKKFIAQVE.

The active-site Nucleophile is glutamate 183. Substrate-binding residues include arginine 261 and glycine 278. Aspartate 354 functions as the Proton donor in the catalytic mechanism. The substrate site is built by tryptophan 407, aspartate 467, and glutamine 476. 2 disordered regions span residues 537–563 (PELE…KVLT) and 581–627 (EETR…LSIK). Basic and acidic residues-rich tracts occupy residues 549-563 (PPEK…KVLT) and 581-595 (EETR…EASK). Over residues 596–616 (RGKRKSSKSKRLPRKVSKKAP) the composition is skewed to basic residues.

Belongs to the glycosyl hydrolase 57 family. As to quaternary structure, monomer.

It catalyses the reaction Transfers a segment of a (1-&gt;4)-alpha-D-glucan chain to a primary hydroxy group in a similar glucan chain.. In terms of biological role, catalyzes the formation of branch points in alpha-glucans by cleavage of an alpha-1,4 glycosidic bond and subsequent transfer of the cleaved-off oligosaccharide to a new alpha-1,6 position. The branch chain-length distribution of the reaction products shows degree of polymerization (DP) of 5 to 30, with two local maxima at DP 6 and DP 11. Exhibits an alpha-retaining catalytic mechanism. Does not display alpha-galactosidase or pullulanase activity, since melibiose and pullulan are not substrates. Is not able to catalyze the hydrolysis or transglycosylation of maltoheptaose, suggesting that the TK1436 protein contains neither alpha-amylase nor 4-alpha-glucanotransferase activity. This chain is 1,4-alpha-glucan branching enzyme TK1436, found in Thermococcus kodakarensis (strain ATCC BAA-918 / JCM 12380 / KOD1) (Pyrococcus kodakaraensis (strain KOD1)).